Consider the following 521-residue polypeptide: Bifunctional purine biosynthesis protein PurH (521 aa).

One can recognise an MGS-like domain in the interval Met-1 to Cys-145.

Belongs to the PurH family.

It catalyses the reaction (6R)-10-formyltetrahydrofolate + 5-amino-1-(5-phospho-beta-D-ribosyl)imidazole-4-carboxamide = 5-formamido-1-(5-phospho-D-ribosyl)imidazole-4-carboxamide + (6S)-5,6,7,8-tetrahydrofolate. It carries out the reaction IMP + H2O = 5-formamido-1-(5-phospho-D-ribosyl)imidazole-4-carboxamide. It participates in purine metabolism; IMP biosynthesis via de novo pathway; 5-formamido-1-(5-phospho-D-ribosyl)imidazole-4-carboxamide from 5-amino-1-(5-phospho-D-ribosyl)imidazole-4-carboxamide (10-formyl THF route): step 1/1. It functions in the pathway purine metabolism; IMP biosynthesis via de novo pathway; IMP from 5-formamido-1-(5-phospho-D-ribosyl)imidazole-4-carboxamide: step 1/1. The sequence is that of Bifunctional purine biosynthesis protein PurH from Janthinobacterium sp. (strain Marseille) (Minibacterium massiliensis).